A 598-amino-acid chain; its full sequence is Elongation factor 4 (598 aa).

The tr-type G domain occupies 4–185; the sequence is KNIRNFSIIA…TIITKIPAPK (182 aa). GTP is bound by residues 16-21 and 132-135; these read DHGKST and NKID.

The protein belongs to the TRAFAC class translation factor GTPase superfamily. Classic translation factor GTPase family. LepA subfamily.

The protein resides in the cell inner membrane. It catalyses the reaction GTP + H2O = GDP + phosphate + H(+). Its function is as follows. Required for accurate and efficient protein synthesis under certain stress conditions. May act as a fidelity factor of the translation reaction, by catalyzing a one-codon backward translocation of tRNAs on improperly translocated ribosomes. Back-translocation proceeds from a post-translocation (POST) complex to a pre-translocation (PRE) complex, thus giving elongation factor G a second chance to translocate the tRNAs correctly. Binds to ribosomes in a GTP-dependent manner. In Campylobacter jejuni subsp. jejuni serotype O:2 (strain ATCC 700819 / NCTC 11168), this protein is Elongation factor 4.